A 385-amino-acid polypeptide reads, in one-letter code: Glutamate 5-kinase (385 aa).

Lysine 18 serves as a coordination point for ATP. Residues serine 57, aspartate 144, and asparagine 156 each coordinate substrate. Threonine 218–lysine 224 contacts ATP. In terms of domain architecture, PUA spans arginine 283–lysine 361.

This sequence belongs to the glutamate 5-kinase family.

Its subcellular location is the cytoplasm. The catalysed reaction is L-glutamate + ATP = L-glutamyl 5-phosphate + ADP. It functions in the pathway amino-acid biosynthesis; L-proline biosynthesis; L-glutamate 5-semialdehyde from L-glutamate: step 1/2. Functionally, catalyzes the transfer of a phosphate group to glutamate to form L-glutamate 5-phosphate. The chain is Glutamate 5-kinase from Syntrophus aciditrophicus (strain SB).